The primary structure comprises 335 residues: Pyruvate dehydrogenase E1 component subunit beta (335 aa).

E60 lines the thiamine diphosphate pocket. The K(+) site is built by A161, I162, and N166.

As to quaternary structure, heterodimer of an alpha and a beta chain. The cofactor is thiamine diphosphate.

It is found in the plastid. It localises to the chloroplast. It carries out the reaction N(6)-[(R)-lipoyl]-L-lysyl-[protein] + pyruvate + H(+) = N(6)-[(R)-S(8)-acetyldihydrolipoyl]-L-lysyl-[protein] + CO2. In terms of biological role, the pyruvate dehydrogenase complex catalyzes the overall conversion of pyruvate to acetyl-CoA and CO(2). It contains multiple copies of three enzymatic components: pyruvate dehydrogenase (E1), dihydrolipoamide acetyltransferase (E2) and lipoamide dehydrogenase (E3). The sequence is that of Pyruvate dehydrogenase E1 component subunit beta (pdhB) from Chlorokybus atmophyticus (Soil alga).